The following is a 320-amino-acid chain: Homeobox-leucine zipper protein HOX25 (320 aa).

Positions 79-139 (AAARKRRLTA…NRRARWKTKQ (61 aa)) form a DNA-binding region, homeobox. The interval 138 to 182 (KQLELDFDRLRAAHDELLAGRTALAADNESLRSQVILLTEKLQAN) is leucine-zipper. Disordered regions lie at residues 181-209 (ANGK…KSFQ) and 249-282 (DSPE…PSSS). The segment covering 265-278 (SEDDCGGAGSDDDY) has biased composition (acidic residues).

This sequence belongs to the HD-ZIP homeobox family. Class I subfamily. As to expression, expressed in roots, leaf sheaths and blades and panicles.

Its subcellular location is the nucleus. Its function is as follows. Probable transcription factor. The chain is Homeobox-leucine zipper protein HOX25 (HOX25) from Oryza sativa subsp. japonica (Rice).